Reading from the N-terminus, the 180-residue chain is tRNA-splicing endonuclease (180 aa).

Residues Y117, H125, and K156 contribute to the active site.

It belongs to the tRNA-intron endonuclease family. Archaeal short subfamily. Homotetramer; although the tetramer contains four active sites, only two participate in the cleavage. Therefore, it should be considered as a dimer of dimers.

It catalyses the reaction pretRNA = a 3'-half-tRNA molecule with a 5'-OH end + a 5'-half-tRNA molecule with a 2',3'-cyclic phosphate end + an intron with a 2',3'-cyclic phosphate and a 5'-hydroxyl terminus.. Endonuclease that removes tRNA introns. Cleaves pre-tRNA at the 5'- and 3'-splice sites to release the intron. The products are an intron and two tRNA half-molecules bearing 2',3' cyclic phosphate and 5'-OH termini. Recognizes a pseudosymmetric substrate in which 2 bulged loops of 3 bases are separated by a stem of 4 bp. The polypeptide is tRNA-splicing endonuclease (Sulfurisphaera tokodaii (strain DSM 16993 / JCM 10545 / NBRC 100140 / 7) (Sulfolobus tokodaii)).